We begin with the raw amino-acid sequence, 431 residues long: Trigger factor (431 aa).

The region spanning 163–248 is the PPIase FKBP-type domain; the sequence is GDTAVLDFEG…IHDVKRKELP (86 aa).

The protein belongs to the FKBP-type PPIase family. Tig subfamily.

The protein resides in the cytoplasm. The catalysed reaction is [protein]-peptidylproline (omega=180) = [protein]-peptidylproline (omega=0). Its function is as follows. Involved in protein export. Acts as a chaperone by maintaining the newly synthesized protein in an open conformation. Functions as a peptidyl-prolyl cis-trans isomerase. The chain is Trigger factor (tig) from Halalkalibacterium halodurans (strain ATCC BAA-125 / DSM 18197 / FERM 7344 / JCM 9153 / C-125) (Bacillus halodurans).